We begin with the raw amino-acid sequence, 390 residues long: Tuftelin (390 aa).

2 coiled-coil regions span residues 88–126 (DKMIHEKNINQLKSEVQYIQEARNCLQKLREDISSKLDR) and 162–351 (DTCI…IEKQ). The disordered stretch occupies residues 358-390 (STQARAKTENPGSIRISKPPSPKPMPVIRVVET).

The protein belongs to the tuftelin family. As to quaternary structure, interacts with TFIP11. Expressed in the epidermis (at protein level). Present in the extracellular enamel and is mainly associated with the crystal component.

The protein localises to the secreted. Functionally, involved in the structural organization of the epidermis. Involved in the mineralization and structural organization of enamel. This chain is Tuftelin (TUFT1), found in Homo sapiens (Human).